The primary structure comprises 145 residues: Holo-[acyl-carrier-protein] synthase (145 aa).

Asp-9 and Glu-63 together coordinate Mg(2+).

This sequence belongs to the P-Pant transferase superfamily. AcpS family. Mg(2+) serves as cofactor.

It is found in the cytoplasm. It carries out the reaction apo-[ACP] + CoA = holo-[ACP] + adenosine 3',5'-bisphosphate + H(+). Transfers the 4'-phosphopantetheine moiety from coenzyme A to a Ser of acyl-carrier-protein. The sequence is that of Holo-[acyl-carrier-protein] synthase from Burkholderia vietnamiensis (strain G4 / LMG 22486) (Burkholderia cepacia (strain R1808)).